A 146-amino-acid chain; its full sequence is Hemoglobin subunit beta (146 aa).

V1 is subject to N-acetylvaline. The Globin domain maps to 2–146; it reads HLTGEEKSTV…VATALAHKYH (145 aa). Position 44 is a phosphoserine (S44). K59 is modified (N6-acetyllysine). H63 is a binding site for heme b. K82 is subject to N6-acetyllysine. H92 serves as a coordination point for heme b. Residue C93 is modified to S-nitrosocysteine. Residue K144 is modified to N6-acetyllysine.

This sequence belongs to the globin family. In terms of assembly, heterotetramer of two alpha chains and two beta chains. Red blood cells.

In terms of biological role, involved in oxygen transport from the lung to the various peripheral tissues. This is Hemoglobin subunit beta (HBB) from Macrotus californicus (Californian leaf-nosed bat).